We begin with the raw amino-acid sequence, 207 residues long: FMN-dependent NADH:quinone oxidoreductase 2 (207 aa).

FMN is bound by residues Ser10, 16-18 (SIS), 96-99 (MYNL), and 141-144 (SRGG).

Belongs to the azoreductase type 1 family. As to quaternary structure, homodimer. FMN serves as cofactor.

It carries out the reaction 2 a quinone + NADH + H(+) = 2 a 1,4-benzosemiquinone + NAD(+). The catalysed reaction is N,N-dimethyl-1,4-phenylenediamine + anthranilate + 2 NAD(+) = 2-(4-dimethylaminophenyl)diazenylbenzoate + 2 NADH + 2 H(+). Functionally, quinone reductase that provides resistance to thiol-specific stress caused by electrophilic quinones. In terms of biological role, also exhibits azoreductase activity. Catalyzes the reductive cleavage of the azo bond in aromatic azo compounds to the corresponding amines. This Trichormus variabilis (strain ATCC 29413 / PCC 7937) (Anabaena variabilis) protein is FMN-dependent NADH:quinone oxidoreductase 2.